Consider the following 93-residue polypeptide: Putative regulatory protein LBL_1834 (93 aa).

Belongs to the RemA family.

The protein is Putative regulatory protein LBL_1834 of Leptospira borgpetersenii serovar Hardjo-bovis (strain L550).